A 114-amino-acid chain; its full sequence is Seed trypsin/chymotrypsin inhibitor TI5-72 (114 aa).

The first 28 residues, 1–28, serve as a signal peptide directing secretion; that stretch reads MELMNKKVMMKLALMVFLLSFAANVVNA. The propeptide occupies 29–42; the sequence is RFDSTSFITQVLSN. Intrachain disulfides connect cysteine 50–cysteine 103, cysteine 51–cysteine 66, cysteine 54–cysteine 99, cysteine 56–cysteine 64, cysteine 73–cysteine 80, cysteine 77–cysteine 92, and cysteine 82–cysteine 90.

This sequence belongs to the Bowman-Birk serine protease inhibitor family. As to expression, seed.

Inhibitor of trypsin and of chymotrypsin. May function as a natural phytochemical defense against predators. In Pisum sativum (Garden pea), this protein is Seed trypsin/chymotrypsin inhibitor TI5-72 (TI572).